Here is a 354-residue protein sequence, read N- to C-terminus: Thiamine thiazole synthase 2, chloroplastic (354 aa).

The N-terminal 44 residues, 1-44 (MATTAASSLLKSSFAGSRLPSATRTTTPSSVAVATPRAGGGPIR), are a transit peptide targeting the chloroplast. A disordered region spans residues 17 to 49 (SRLPSATRTTTPSSVAVATPRAGGGPIRASISS). The segment covering 20-32 (PSATRTTTPSSVA) has biased composition (polar residues). Residues A97, 117-118 (EQ), G125, and V190 each bind substrate. C219 carries the 2,3-didehydroalanine (Cys) modification. Residues D221, H236, M288, and 298 to 300 (RMG) contribute to the substrate site.

The protein belongs to the THI4 family. Homooctamer. Fe cation is required as a cofactor. Post-translationally, during the catalytic reaction, a sulfide is transferred from Cys-219 to a reaction intermediate, generating a dehydroalanine residue. As to expression, highest expression in developing embryos and green leaves and a very low level expression seen in endosperm, roots, etiolated shoots and immature ears.

Its subcellular location is the plastid. It is found in the chloroplast. It carries out the reaction [ADP-thiazole synthase]-L-cysteine + glycine + NAD(+) = [ADP-thiazole synthase]-dehydroalanine + ADP-5-ethyl-4-methylthiazole-2-carboxylate + nicotinamide + 3 H2O + 2 H(+). Involved in biosynthesis of the thiamine precursor thiazole. Catalyzes the conversion of NAD and glycine to adenosine diphosphate 5-(2-hydroxyethyl)-4-methylthiazole-2-carboxylic acid (ADT), an adenylated thiazole intermediate. The reaction includes an iron-dependent sulfide transfer from a conserved cysteine residue of the protein to a thiazole intermediate. The enzyme can only undergo a single turnover, which suggests it is a suicide enzyme. May have additional roles in adaptation to various stress conditions and in DNA damage tolerance. The sequence is that of Thiamine thiazole synthase 2, chloroplastic from Zea mays (Maize).